Here is a 644-residue protein sequence, read N- to C-terminus: MFQDNPLLAQLKQQLHTQTPRVEGVVKGTEKGFGFLEVDGQKSYFIPPPQMKKVMHGDRIIATLHTDKDREIAEPETLVEPFLSRFVGRVQRKDDRLSIVPDHPLLRDAIQCRPVRELTHSFQNGDWAVAEMCRHPLKGDRAFQADLTAFITNGEDHFVPWWVTLARHNLEREAPAMVESALNDAELEREDLTALNFVTIDSASTEDMDDALFVQDNGDGSWLLTIAIADPTAYVVENSELDLTARKRAFTNYLPGFNIPMLPRDLSDNLCSLRPNERRPVLVCRVTITEEGTLSNDIRFSAAWVESKAKLVYDDVSDWLEGNNRWQPQDTAIAEQITLLKRICDARSNWRQQHALVFKDRPDYRFLLGEKGEVLDIIVEHRRIANRIVEECMIAANVCAALALREHLGFGIYNVHTGFDPALVEQAASVLKANGVGADPQALLTLPGFCELRRHLDALPTQFLDSRIRRFQTFAEISTVPGPHFGLGLEAYATWTSPIRKYGDMVNHRLLKAMITGQQAEKPQEEITVQLAERRRLNRMAERDVGDWLYARYLQPQAGTDTRFTAEIIDITRGGLRVRLLDNGAVAFIPAPFIHAVRDEVVCSQETGTVQIKGETVYSQSDKIEVRIAEVRMETRNVIARPVA.

Positions 189 to 516 (REDLTALNFV…NHRLLKAMIT (328 aa)) constitute an RNB domain. The S1 motif domain maps to 561–643 (DTRFTAEIID…ETRNVIARPV (83 aa)).

Belongs to the RNR ribonuclease family. RNase II subfamily.

The protein localises to the cytoplasm. It carries out the reaction Exonucleolytic cleavage in the 3'- to 5'-direction to yield nucleoside 5'-phosphates.. Its function is as follows. Involved in mRNA degradation. Hydrolyzes single-stranded polyribonucleotides processively in the 3' to 5' direction. The polypeptide is Exoribonuclease 2 (Yersinia pestis bv. Antiqua (strain Antiqua)).